Reading from the N-terminus, the 333-residue chain is Succinylglutamate desuccinylase (333 aa).

Zn(2+) is bound by residues His-56, Glu-59, and His-149. Residue Glu-214 is part of the active site.

It belongs to the AspA/AstE family. Succinylglutamate desuccinylase subfamily. Zn(2+) serves as cofactor.

It catalyses the reaction N-succinyl-L-glutamate + H2O = L-glutamate + succinate. It functions in the pathway amino-acid degradation; L-arginine degradation via AST pathway; L-glutamate and succinate from L-arginine: step 5/5. Its function is as follows. Transforms N(2)-succinylglutamate into succinate and glutamate. This Chromobacterium violaceum (strain ATCC 12472 / DSM 30191 / JCM 1249 / CCUG 213 / NBRC 12614 / NCIMB 9131 / NCTC 9757 / MK) protein is Succinylglutamate desuccinylase.